We begin with the raw amino-acid sequence, 463 residues long: Argininosuccinate lyase (463 aa).

Belongs to the lyase 1 family. Argininosuccinate lyase subfamily.

It localises to the cytoplasm. It catalyses the reaction 2-(N(omega)-L-arginino)succinate = fumarate + L-arginine. It participates in amino-acid biosynthesis; L-arginine biosynthesis; L-arginine from L-ornithine and carbamoyl phosphate: step 3/3. This Dinoroseobacter shibae (strain DSM 16493 / NCIMB 14021 / DFL 12) protein is Argininosuccinate lyase.